A 428-amino-acid chain; its full sequence is MGKKLVVIGAQWGDEGKGKIVDLLTERAGAVVRFQGGHNAGHTLVVHGKKTVLHLIPSGIMHDHVMSYIGNGVVLCLRALFEEIKALTAEGIPVKERLRISPACALILPSHIALDQARETARGKDKIGTTGRGIGPCYEDKIARRGLRLEDLRHPDDFRQKMQALMTYHNFLLENYYHQTAVDIDATIEEWLAYGKDVLPLMEDVTLALQRHQEQNVIFEGAQGAMLDIDQGTYPFVTSSNTAAGSASCGSGVGPHQLDYILAITKAYTTRVGSGPFPSEQINDIGEHLAKVGVEVGASTGRRRRCGWLDLPALRRALLNSSFDGVCLTKLDVLDELDEIKICTAYCHHEQIIDVAPLGSESLAECEPVYETFTGWKTSTFGIKNEAELPQKARDYIAKIEEYLGIPVVIISTGADRSHTIMRQSLLE.

GTP is bound by residues 13–19 and 41–43; these read GDEGKGK and GHT. The active-site Proton acceptor is the Asp-14. Mg(2+) contacts are provided by Asp-14 and Gly-41. IMP contacts are provided by residues 14–17, 39–42, Thr-130, Arg-144, Gln-223, Thr-238, and Arg-302; these read DEGK and NAGH. The Proton donor role is filled by His-42. Residue 298-304 participates in substrate binding; the sequence is ASTGRRR. GTP-binding positions include Arg-304, 330–332, and 412–414; these read KLD and STG.

This sequence belongs to the adenylosuccinate synthetase family. Homodimer. The cofactor is Mg(2+).

It is found in the cytoplasm. The enzyme catalyses IMP + L-aspartate + GTP = N(6)-(1,2-dicarboxyethyl)-AMP + GDP + phosphate + 2 H(+). It functions in the pathway purine metabolism; AMP biosynthesis via de novo pathway; AMP from IMP: step 1/2. Plays an important role in the de novo pathway of purine nucleotide biosynthesis. Catalyzes the first committed step in the biosynthesis of AMP from IMP. The sequence is that of Adenylosuccinate synthetase from Dichelobacter nodosus (strain VCS1703A).